We begin with the raw amino-acid sequence, 238 residues long: Ribonuclease PH (238 aa).

Phosphate is bound by residues arginine 86 and 124 to 126 (GTR).

The protein belongs to the RNase PH family. Homohexameric ring arranged as a trimer of dimers.

It carries out the reaction tRNA(n+1) + phosphate = tRNA(n) + a ribonucleoside 5'-diphosphate. Phosphorolytic 3'-5' exoribonuclease that plays an important role in tRNA 3'-end maturation. Removes nucleotide residues following the 3'-CCA terminus of tRNAs; can also add nucleotides to the ends of RNA molecules by using nucleoside diphosphates as substrates, but this may not be physiologically important. Probably plays a role in initiation of 16S rRNA degradation (leading to ribosome degradation) during starvation. The polypeptide is Ribonuclease PH (Anaeromyxobacter sp. (strain Fw109-5)).